A 325-amino-acid polypeptide reads, in one-letter code: Holliday junction branch migration complex subunit RuvB (325 aa).

A large ATPase domain (RuvB-L) region spans residues 1 to 180; sequence MKNQLLDAKV…FGIHLKLNFY (180 aa). Residues Leu-19, Arg-20, Gly-61, Lys-64, Thr-65, Ser-66, 127-129, Arg-170, Tyr-180, and Arg-217 each bind ATP; that span reads EDF. Thr-65 contributes to the Mg(2+) binding site. The small ATPAse domain (RuvB-S) stretch occupies residues 181–251; that stretch reads SCEELTQIVE…ITDYALNQLG (71 aa). The interval 254–325 is head domain (RuvB-H); the sequence is KLGLDSSDHK…ITANALKHLH (72 aa). DNA is bound by residues Arg-290, Arg-309, and Arg-314.

It belongs to the RuvB family. Homohexamer. Forms an RuvA(8)-RuvB(12)-Holliday junction (HJ) complex. HJ DNA is sandwiched between 2 RuvA tetramers; dsDNA enters through RuvA and exits via RuvB. An RuvB hexamer assembles on each DNA strand where it exits the tetramer. Each RuvB hexamer is contacted by two RuvA subunits (via domain III) on 2 adjacent RuvB subunits; this complex drives branch migration. In the full resolvosome a probable DNA-RuvA(4)-RuvB(12)-RuvC(2) complex forms which resolves the HJ.

It is found in the cytoplasm. The catalysed reaction is ATP + H2O = ADP + phosphate + H(+). Its function is as follows. The RuvA-RuvB-RuvC complex processes Holliday junction (HJ) DNA during genetic recombination and DNA repair, while the RuvA-RuvB complex plays an important role in the rescue of blocked DNA replication forks via replication fork reversal (RFR). RuvA specifically binds to HJ cruciform DNA, conferring on it an open structure. The RuvB hexamer acts as an ATP-dependent pump, pulling dsDNA into and through the RuvAB complex. RuvB forms 2 homohexamers on either side of HJ DNA bound by 1 or 2 RuvA tetramers; 4 subunits per hexamer contact DNA at a time. Coordinated motions by a converter formed by DNA-disengaged RuvB subunits stimulates ATP hydrolysis and nucleotide exchange. Immobilization of the converter enables RuvB to convert the ATP-contained energy into a lever motion, pulling 2 nucleotides of DNA out of the RuvA tetramer per ATP hydrolyzed, thus driving DNA branch migration. The RuvB motors rotate together with the DNA substrate, which together with the progressing nucleotide cycle form the mechanistic basis for DNA recombination by continuous HJ branch migration. Branch migration allows RuvC to scan DNA until it finds its consensus sequence, where it cleaves and resolves cruciform DNA. The chain is Holliday junction branch migration complex subunit RuvB from Orientia tsutsugamushi (strain Boryong) (Rickettsia tsutsugamushi).